Here is a 458-residue protein sequence, read N- to C-terminus: ATP synthase subunit beta (458 aa).

148 to 155 lines the ATP pocket; sequence GGAGVGKT.

Belongs to the ATPase alpha/beta chains family. F-type ATPases have 2 components, CF(1) - the catalytic core - and CF(0) - the membrane proton channel. CF(1) has five subunits: alpha(3), beta(3), gamma(1), delta(1), epsilon(1). CF(0) has three main subunits: a(1), b(2) and c(9-12). The alpha and beta chains form an alternating ring which encloses part of the gamma chain. CF(1) is attached to CF(0) by a central stalk formed by the gamma and epsilon chains, while a peripheral stalk is formed by the delta and b chains.

It is found in the cell inner membrane. The enzyme catalyses ATP + H2O + 4 H(+)(in) = ADP + phosphate + 5 H(+)(out). Its function is as follows. Produces ATP from ADP in the presence of a proton gradient across the membrane. The catalytic sites are hosted primarily by the beta subunits. This Ectopseudomonas mendocina (strain ymp) (Pseudomonas mendocina) protein is ATP synthase subunit beta.